A 368-amino-acid chain; its full sequence is uncharacterized protein (368 aa).

The next 5 membrane-spanning stretches (helical) occupy residues 22 to 42, 74 to 94, 104 to 124, 144 to 164, and 168 to 188; these read VAGI…FTLI, FVKP…LLVL, FLKT…LNLF, VGDF…GASL, and WGVN…AVSL.

This sequence belongs to the MscS (TC 1.A.23) family.

It is found in the cell membrane. This is an uncharacterized protein from Aquifex aeolicus (strain VF5).